We begin with the raw amino-acid sequence, 695 residues long: L-type lectin-domain containing receptor kinase S.7 (695 aa).

Residues 1 to 23 (MPPRCRRLPLLFILLLAVRPLSA) form the signal peptide. Over 24–331 (AAASSIAAAP…NHRRRHLFYK (308 aa)) the chain is Extracellular. The legume-lectin like stretch occupies residues 37-276 (YRRISWASNL…VERWTFRTFG (240 aa)). 2 N-linked (GlcNAc...) asparagine glycosylation sites follow: N45 and N279. Pro residues predominate over residues 286–320 (PTKYIGPMPPNNQPLPPPPSPSPSPPPPSPPPPPH). Residues 286 to 323 (PTKYIGPMPPNNQPLPPPPSPSPSPPPPSPPPPPHPNH) form a disordered region. A helical transmembrane segment spans residues 332-352 (VLGGVLGGMVLLGLVVVGSAV). The Cytoplasmic segment spans residues 353–695 (LLGRSVRRKN…TANTAFFSCR (343 aa)). The residue at position 376 (T376) is a Phosphothreonine. At S378 the chain carries Phosphoserine. Residues T386 and T403 each carry the phosphothreonine modification. A Protein kinase domain is found at 389-661 (FDSGNVIGVG…SMLDGTAPLI (273 aa)). ATP contacts are provided by residues 395–403 (IGVGGSGAT) and K418. D514 acts as the Proton acceptor in catalysis. Residue T657 is modified to Phosphothreonine.

This sequence in the N-terminal section; belongs to the leguminous lectin family. In the C-terminal section; belongs to the protein kinase superfamily. Ser/Thr protein kinase family. Interacts with INP1. Interaction with INP1 is required for DAF1 polar localization at the future aperture sites in tetrads. Post-translationally, autophosphorylated at Thr-376; Ser-378; Thr-386; Thr-403 and Thr-657. As to expression, expressed in roots, leaves, lemma, palea, pistil and anthers.

It localises to the cell membrane. The protein localises to the cytoplasm. It is found in the cytosol. The enzyme catalyses L-seryl-[protein] + ATP = O-phospho-L-seryl-[protein] + ADP + H(+). It carries out the reaction L-threonyl-[protein] + ATP = O-phospho-L-threonyl-[protein] + ADP + H(+). Functionally, legume-lectin receptor-like kinase required for normal pollen development and male fertility. Regulates pollen exine assembly and aperture development. Plays a critical role in annulus formation, and may participate in the formation of the fibrillar-granular layer underneath the operculum. May function by regulating the expression of genes involved in pollen exine development. Kinase activity is required for its function in pollen development. In Oryza sativa subsp. japonica (Rice), this protein is L-type lectin-domain containing receptor kinase S.7.